The chain runs to 658 residues: Glycogen debranching enzyme (658 aa).

The Nucleophile role is filled by aspartate 336. Glutamate 371 acts as the Proton donor in catalysis. The segment at glutamate 459–leucine 486 is disordered.

It belongs to the glycosyl hydrolase 13 family.

The enzyme catalyses Hydrolysis of (1-&gt;6)-alpha-D-glucosidic linkages to branches with degrees of polymerization of three or four glucose residues in limit dextrin.. It participates in glycan degradation; glycogen degradation. Removes maltotriose and maltotetraose chains that are attached by 1,6-alpha-linkage to the limit dextrin main chain, generating a debranched limit dextrin. The polypeptide is Glycogen debranching enzyme (Salmonella gallinarum (strain 287/91 / NCTC 13346)).